The chain runs to 414 residues: MTEQLQPLRGMKDLLPDDYKVHDYIINKARDVGVLYGYKQMSTPIVEYTKVFNRSMGESSDVISKEIYSFLDKSNDCVALRPEFTACIIRSIISNRLQHKLPLKFFSTGPVFRYDRPQAGRQRQFHQLNYEYIGAKGAITDADTLKLAVDILKALEIEQDTTLELNSLGCNESRRVYQQKLVEYLNDFKEQLSEESKIRLSKNPMRILDSKSETDQKIIANAPVLSEYYTDESKEYFEELIQYLDILGVKYSINPRLVRGLDYYCHTAFEFTTKKLGSQSTILAGGRYDGLAKIMGNNDDVPAIGFAAGIERIALMREYDVSEVKPVFVLPIGKNNICYALEIVDKLRTENIAIIIESLGKIAKRMQRIFNENAQFIIFIGDEEQANNNLKIKDLKKEEEYIVDFAKALELLKK.

The protein belongs to the class-II aminoacyl-tRNA synthetase family. In terms of assembly, homodimer.

Its subcellular location is the cytoplasm. It catalyses the reaction tRNA(His) + L-histidine + ATP = L-histidyl-tRNA(His) + AMP + diphosphate + H(+). The chain is Histidine--tRNA ligase from Rickettsia rickettsii (strain Iowa).